Consider the following 327-residue polypeptide: Tetraspanin-4 (327 aa).

Residues 1–6 (MRSRSN) are Cytoplasmic-facing. The chain crosses the membrane as a helical span at residues 7–27 (LIGLINFFTFLLSIPILGGGI). Over 28–43 (WLSSRANSTDCLRFLQ) the chain is Extracellular. N-linked (GlcNAc...) asparagine glycosylation occurs at Asn-34. A helical membrane pass occupies residues 44 to 64 (WPLIIIGISIMVISLAGIAGA). Residues 65–75 (CYQNKFLMWLY) lie on the Cytoplasmic side of the membrane. A helical transmembrane segment spans residues 76–96 (LFTMFFVIAALIGFTIFAYVV). Topologically, residues 97 to 235 (TDKGSGRFVM…LGSLKKSWRK (139 aa)) are extracellular. N-linked (GlcNAc...) asparagine glycosylation is present at Asn-187. Residues 236 to 256 (VSVINIVVVIILVIFYVIACA) form a helical membrane-spanning segment. The Cytoplasmic portion of the chain corresponds to 257–287 (AYQNVKRMYNDEPVGEARMTNLILVIFKFKE). A helical membrane pass occupies residues 288 to 308 (ILVQFFFGIVFLLLFNGLMVC). Residues 309 to 327 (CCNDKFAFSVFFFGYVTYA) lie on the Extracellular side of the membrane.

Belongs to the tetraspanin (TM4SF) family.

The protein localises to the membrane. In terms of biological role, may be involved in the regulation of cell differentiation. The chain is Tetraspanin-4 (TET4) from Arabidopsis thaliana (Mouse-ear cress).